We begin with the raw amino-acid sequence, 370 residues long: Phosphoserine aminotransferase (370 aa).

Met-1 is subject to N-acetylmethionine. Positions 44 and 45 each coordinate O-phospho-L-serine. N6-acetyllysine is present on Lys-51. Residues Gly-79, Cys-80, and Trp-107 each coordinate pyridoxal 5'-phosphate. Lys-127 is modified (N6-acetyllysine). Residues Thr-156, Asp-176, and Gln-199 each contribute to the pyridoxal 5'-phosphate site. Lys-200 carries the post-translational modification N6-(pyridoxal phosphate)lysine. 2 residues coordinate pyridoxal 5'-phosphate: Asn-241 and Thr-242. N6-acetyllysine is present on residues Lys-269, Lys-318, and Lys-323. A Phosphoserine modification is found at Ser-331. Residue Lys-333 is modified to N6-acetyllysine. Positions 335, 336, and 342 each coordinate O-phospho-L-serine.

It belongs to the class-V pyridoxal-phosphate-dependent aminotransferase family. SerC subfamily. As to quaternary structure, homodimer. Pyridoxal 5'-phosphate serves as cofactor. In terms of tissue distribution, expressed at high levels in the brain, liver, kidney and pancreas, and very weakly expressed in the thymus, prostate, testis and colon.

It catalyses the reaction O-phospho-L-serine + 2-oxoglutarate = 3-phosphooxypyruvate + L-glutamate. The protein operates within amino-acid biosynthesis; L-serine biosynthesis; L-serine from 3-phospho-D-glycerate: step 2/3. With respect to regulation, phosphoserine transaminase activity is strongly stimulated by increasing the ionic strength. Its function is as follows. Involved in L-serine biosynthesis via the phosphorylated pathway, a three-step pathway converting the glycolytic intermediate 3-phospho-D-glycerate into L-serine. Catalyzes the second step, that is the pyridoxal 5'-phosphate-dependent transamination of 3-phosphohydroxypyruvate and L-glutamate to O-phosphoserine (OPS) and alpha-ketoglutarate. This is Phosphoserine aminotransferase from Homo sapiens (Human).